The following is a 494-amino-acid chain: Probable cytochrome P450 515A1 (494 aa).

The helical transmembrane segment at 1-21 (MILGIILGLFIYIYLINIKFF) threads the bilayer. C440 is a binding site for heme.

This sequence belongs to the cytochrome P450 family. Heme serves as cofactor.

It localises to the membrane. In Dictyostelium discoideum (Social amoeba), this protein is Probable cytochrome P450 515A1 (cyp515A1).